We begin with the raw amino-acid sequence, 439 residues long: Enolase 1-1 (439 aa).

Thr-85 carries the post-translational modification Phosphothreonine. 2 residues coordinate substrate: His-159 and Glu-168. Glu-211 serves as the catalytic Proton donor. Asp-246 contacts Mg(2+). Phosphoserine is present on residues Ser-249 and Ser-250. At Tyr-253 the chain carries Phosphotyrosine. 2 residues coordinate substrate: Glu-295 and Asp-320. Mg(2+)-binding residues include Glu-295 and Asp-320. Lys-345 acts as the Proton acceptor in catalysis. A Phosphoserine modification is found at Ser-351. Residue Thr-353 is modified to Phosphothreonine. Ser-355 is modified (phosphoserine). Substrate is bound by residues 372–375 (SHRS) and Lys-396. Ser-421 carries the post-translational modification Phosphoserine.

It belongs to the enolase family. Homodimer. Requires Mg(2+) as cofactor.

The protein resides in the cytoplasm. It carries out the reaction (2R)-2-phosphoglycerate = phosphoenolpyruvate + H2O. The protein operates within carbohydrate degradation; glycolysis; pyruvate from D-glyceraldehyde 3-phosphate: step 4/5. The polypeptide is Enolase 1-1 (eno101) (Schizosaccharomyces pombe (strain 972 / ATCC 24843) (Fission yeast)).